The following is a 209-amino-acid chain: NAD(P)H dehydrogenase (quinone) (209 aa).

The 196-residue stretch at 4–199 folds into the Flavodoxin-like domain; it reads VNIIFYSMYG…AMARYQGRHV (196 aa). FMN is bound by residues 10 to 15 and 87 to 89; these read SMYGHV and TRY. Position 12 (tyrosine 12) interacts with NAD(+). Tryptophan 107 contributes to the substrate binding site. Residues 122–128 and histidine 143 each bind FMN; that span reads SSGTQHG.

Belongs to the WrbA family. The cofactor is FMN.

The catalysed reaction is a quinone + NADH + H(+) = a quinol + NAD(+). It catalyses the reaction a quinone + NADPH + H(+) = a quinol + NADP(+). The polypeptide is NAD(P)H dehydrogenase (quinone) (Methanosarcina acetivorans (strain ATCC 35395 / DSM 2834 / JCM 12185 / C2A)).